The primary structure comprises 82 residues: Cytochrome b559 subunit alpha (82 aa).

Residues V21–W35 form a helical membrane-spanning segment. H23 provides a ligand contact to heme.

This sequence belongs to the PsbE/PsbF family. Heterodimer of an alpha subunit and a beta subunit. PSII is composed of 1 copy each of membrane proteins PsbA, PsbB, PsbC, PsbD, PsbE, PsbF, PsbH, PsbI, PsbJ, PsbK, PsbL, PsbM, PsbT, PsbX, PsbY, PsbZ, Psb30/Ycf12, at least 3 peripheral proteins of the oxygen-evolving complex and a large number of cofactors. It forms dimeric complexes. It depends on heme b as a cofactor.

The protein resides in the plastid. It localises to the chloroplast thylakoid membrane. Its function is as follows. This b-type cytochrome is tightly associated with the reaction center of photosystem II (PSII). PSII is a light-driven water:plastoquinone oxidoreductase that uses light energy to abstract electrons from H(2)O, generating O(2) and a proton gradient subsequently used for ATP formation. It consists of a core antenna complex that captures photons, and an electron transfer chain that converts photonic excitation into a charge separation. The sequence is that of Cytochrome b559 subunit alpha from Chlamydomonas reinhardtii (Chlamydomonas smithii).